The sequence spans 141 residues: MAIERTLSIIKPDAVAKNVIGQIYARFEGAGLKVVAAKMIHLSRAEAEQFYAVHKERPFFKDLVDFMISGPVMVQALEGESAIVKNRDLMGATDPKKAEKGTIRADFADSIDANAVHGSDAAETAAVEVAFFFPGLNIYSR.

Residues lysine 11, phenylalanine 59, arginine 87, threonine 93, arginine 104, and asparagine 114 each coordinate ATP. Histidine 117 functions as the Pros-phosphohistidine intermediate in the catalytic mechanism.

Belongs to the NDK family. Homotetramer. The cofactor is Mg(2+).

The protein resides in the cytoplasm. It catalyses the reaction a 2'-deoxyribonucleoside 5'-diphosphate + ATP = a 2'-deoxyribonucleoside 5'-triphosphate + ADP. The catalysed reaction is a ribonucleoside 5'-diphosphate + ATP = a ribonucleoside 5'-triphosphate + ADP. In terms of biological role, major role in the synthesis of nucleoside triphosphates other than ATP. The ATP gamma phosphate is transferred to the NDP beta phosphate via a ping-pong mechanism, using a phosphorylated active-site intermediate. This is Nucleoside diphosphate kinase from Ralstonia nicotianae (strain ATCC BAA-1114 / GMI1000) (Ralstonia solanacearum).